Reading from the N-terminus, the 89-residue chain is Small ribosomal subunit protein bS20 (89 aa).

The disordered stretch occupies residues 1-28 (MTLANIKSAKKRAVQSEKSRQHNASQRS).

Belongs to the bacterial ribosomal protein bS20 family.

Functionally, binds directly to 16S ribosomal RNA. This Mannheimia succiniciproducens (strain KCTC 0769BP / MBEL55E) protein is Small ribosomal subunit protein bS20.